The primary structure comprises 25 residues: Small ribosomal subunit protein eS32 (25 aa).

The tract at residues 1 to 25 is disordered; the sequence is MRAKWRKKRMRRLKRKRRKMRARSK.

This sequence belongs to the eukaryotic ribosomal protein eS32 family. In terms of assembly, component of the small ribosomal subunit.

This is Small ribosomal subunit protein eS32 (RpL41) from Spodoptera frugiperda (Fall armyworm).